A 551-amino-acid chain; its full sequence is Nucleobase-ascorbate transporter 3 (551 aa).

The disordered stretch occupies residues 1–30 (MVETGHHHQHPPAPAAAGHPPVPSMAMARN). The next 12 membrane-spanning stretches (helical) occupy residues 56–76 (ETVV…VLIA), 92–111 (RVIQ…QTLI), 117–136 (TVMG…IRDY), 158–178 (SLII…WGNL), 179–199 (IRIF…LGLF), 202–222 (GFPL…LLII), 242–262 (ALLV…VSGA), 306–326 (VFGM…VFFA), 390–410 (FFMI…SIPL), 412–432 (IFAG…ISFI), 442–462 (NMYV…YFLA), and 481–501 (DILN…ATIL).

This sequence belongs to the nucleobase:cation symporter-2 (NCS2) (TC 2.A.40) family. In terms of tissue distribution, expressed in the apical meristem 4 days after imbibition (DAI). Expressed in the major veins of rosette leaves and pedicels. Expressed in the root central cylinder, root meristems, root tips and lateral root primordia.

It localises to the membrane. The sequence is that of Nucleobase-ascorbate transporter 3 (NAT3) from Arabidopsis thaliana (Mouse-ear cress).